Consider the following 257-residue polypeptide: Transmembrane protein 101 (257 aa).

The next 8 helical transmembrane spans lie at 21-40 (VLLT…LYAE), 52-72 (VPYL…MSFG), 77-97 (WFAL…YIGG), 110-130 (YSRT…AGEL), 139-159 (SLQS…AYSL), 182-202 (LFFV…YVTL), 206-226 (ILAV…AYWH), and 233-253 (FWNQ…AVIL).

Its subcellular location is the membrane. Its function is as follows. May activate NF-kappa-B signaling pathways. The chain is Transmembrane protein 101 (TMEM101) from Homo sapiens (Human).